Here is a 480-residue protein sequence, read N- to C-terminus: Aspartyl/glutamyl-tRNA(Asn/Gln) amidotransferase subunit B (480 aa).

This sequence belongs to the GatB/GatE family. GatB subfamily. As to quaternary structure, heterotrimer of A, B and C subunits.

The catalysed reaction is L-glutamyl-tRNA(Gln) + L-glutamine + ATP + H2O = L-glutaminyl-tRNA(Gln) + L-glutamate + ADP + phosphate + H(+). It carries out the reaction L-aspartyl-tRNA(Asn) + L-glutamine + ATP + H2O = L-asparaginyl-tRNA(Asn) + L-glutamate + ADP + phosphate + 2 H(+). Allows the formation of correctly charged Asn-tRNA(Asn) or Gln-tRNA(Gln) through the transamidation of misacylated Asp-tRNA(Asn) or Glu-tRNA(Gln) in organisms which lack either or both of asparaginyl-tRNA or glutaminyl-tRNA synthetases. The reaction takes place in the presence of glutamine and ATP through an activated phospho-Asp-tRNA(Asn) or phospho-Glu-tRNA(Gln). The sequence is that of Aspartyl/glutamyl-tRNA(Asn/Gln) amidotransferase subunit B from Streptococcus thermophilus (strain ATCC BAA-491 / LMD-9).